The chain runs to 1311 residues: DENN domain-containing protein 5B (1311 aa).

Residues 53–270 form the uDENN domain; the sequence is ATAAGENFDQ…EVPLPASGRS (218 aa). A compositionally biased stretch (polar residues) spans 154 to 165; it reads QAEHNTSAQNCT. The segment at 154-201 is disordered; that stretch reads QAEHNTSAQNCTSSSSSSSSSSSSSSMDSLSSSLDDVDSPSAHGGRRT. Low complexity predominate over residues 166–187; sequence SSSSSSSSSSSSSSMDSLSSSL. Residues 289–452 enclose the cDENN domain; it reads ELPLADFPLA…AVMSLQTSVL (164 aa). The region spanning 454-619 is the dDENN domain; it reads KELKSTSLRE…DNKIMSQWEE (166 aa). The 161-residue stretch at 809–969 folds into the RUN 1 domain; the sequence is LEENTLIASL…DYFCFTSVFT (161 aa). The segment at 854-874 is disordered; that stretch reads EQQLESPVSNGQERRKTESSV. A helical membrane pass occupies residues 962–982; that stretch reads FCFTSVFTTIMIPYRAVIIPI. Positions 973-1081 constitute a PLAT domain; sequence IPYRAVIIPI…DDGSLERVLI (109 aa). One can recognise an RUN 2 domain in the interval 1155 to 1306; the sequence is TVLLCGEGGL…FPITLETSLT (152 aa).

The protein belongs to the RAB6IP1 family.

The protein resides in the membrane. Guanine nucleotide exchange factor (GEF) which may activate the small GTPases Rab. May promote the exchange of GDP to GTP, converting inactive GDP-bound Rab proteins into their active GTP-bound form. This chain is DENN domain-containing protein 5B (dennd5b), found in Danio rerio (Zebrafish).